The chain runs to 423 residues: Protein phosphatase 2C 77 (423 aa).

Positions 74 to 95 (GDEINGSDEFDPRSMNQSEKKV) are disordered. The PPM-type phosphatase domain occupies 112–411 (LYGVTSICGR…DNISVVVVDL (300 aa)). Asp-165, Asp-251, and Ser-252 together coordinate Mg(2+). A disulfide bond links Cys-257 and Cys-331. Residues Asp-337 and Asp-402 each coordinate Mg(2+).

It belongs to the PP2C family. In terms of assembly, interacts with SPK1, CIPK15/PKS3, GPX3, SCAR1, SCAR2, SCAR3 and SCARL. Also interacts with CIPK24/SOS2. Binds to the fibrillin precursor protein. Interacts with ABA-bounded PYR1, PYL1, PYL2, PYL3, PYL4, PYL5, PYL6, PYL8 and PYL9, and with free PYL2, PYL3 and PYL4. Interacts with and represses GHR1, and, to a lesser extent, SRK2E/OST1. Mg(2+) is required as a cofactor. Requires Mn(2+) as cofactor.

It catalyses the reaction O-phospho-L-seryl-[protein] + H2O = L-seryl-[protein] + phosphate. The catalysed reaction is O-phospho-L-threonyl-[protein] + H2O = L-threonyl-[protein] + phosphate. Its activity is regulated as follows. Phosphatase activity repressed by oxidized ATGPX3, free fatty acids (e.g. arachidonic acid (20:4) and Linolenic acid (18:3)) and by H(2)O(2). Repressed by PYR/PYL/RCAR ABA receptors in an ABA-dependent manner. Its function is as follows. Repressor of the abscisic acid (ABA) signaling pathway that regulates numerous ABA responses, such as stomatal closure, osmotic water permeability of the plasma membrane (Pos), high light stress, response to glucose, seed germination and inhibition of vegetative growth. During the stomatal closure regulation, modulates the inward calcium-channel permeability as well as H(2)O(2) and oxidative burst in response to ABA and dehydration. Represses GHR1 and, to some extent, SRK2E/OST1, kinases involved in the regulation of SLAC1-dependent stomatal closure. Controls negatively fibrillin that is involved in mediating ABA-induced photoprotection. May be implicated in ABA content regulation. Involved in acquired thermotolerance of root growth and seedling survival. Required for the Erwinia amylovora harpin-induced (HrpN) drought tolerance. Involved in the hydrotropic response. This chain is Protein phosphatase 2C 77, found in Arabidopsis thaliana (Mouse-ear cress).